The sequence spans 977 residues: Short transient receptor potential channel 4 (977 aa).

Over 1–324 (MAQFYYKRNV…YDEFPGWRRR (324 aa)) the chain is Cytoplasmic. ANK repeat units follow at residues 29–60 (LSPS…IYFK), 71–93 (RTAL…LSFN), 96–118 (VGDA…LLNH), and 141–165 (PDIT…VQKG). Zn(2+) contacts are provided by His-172, Cys-176, Cys-178, and Cys-181. Positions 223-260 (LSWELQELSKVENEFKSEYEELSRQCKQFAKDLLDQTR) form a coiled coil. The segment at residues 325 to 359 (HWAVKMVTCFIIGLLFPVFSVCYLIAPKSPLGLFI) is an intramembrane region (discontinuously helical). At 360-362 (RKP) the chain is on the cytoplasmic side. Residues 363-383 (FIKFICHTASYLTFLFLLLLA) traverse the membrane as a helical segment. The Extracellular segment spans residues 384–403 (SQHIDRSDLNRQGPPPTIVE). The helical transmembrane segment at 404–418 (WMILPWVLGFIWGEI) threads the bilayer. Residues Glu-417, Gln-420, Asn-435, and Asp-438 each contribute to the Ca(2+) site. At 419 to 432 (KQMWDGGLQDYIHD) the chain is on the cytoplasmic side. A helical membrane pass occupies residues 433–453 (WWNLMDFVMNSLYLATISLKI). Topologically, residues 454–475 (VAFVKYSALNPRESWDMWHPTL) are extracellular. Residues 476–498 (VAEALFAIANIFSSLRLISLFTA) traverse the membrane as a helical segment. Residues 499–511 (NSHLGPLQISLGR) lie on the Cytoplasmic side of the membrane. Residues 512–534 (MLLDILKFLFIYCLVLLAFANGL) form a helical membrane-spanning segment. Over 535–599 (NQLYFYYEET…HEFTEFVGAT (65 aa)) the chain is Extracellular. Cys-549 and Cys-554 are disulfide-bonded. A helical transmembrane segment spans residues 600–620 (MFGTYNVISLVVLLNMLIAMM). Residues 615 to 977 (MLIAMMNNSY…THEDYVTTRL (363 aa)) are interaction with ITPR1, ITPR2 and ITPR3. Over 621–977 (NNSYQLIADH…THEDYVTTRL (357 aa)) the chain is Cytoplasmic. Positions 762–790 (IQSANASKESSNSADSDEKSDSEGNSKDK) are disordered. Residues 764 to 775 (SANASKESSNSA) show a composition bias toward low complexity. Residues 777 to 788 (SDEKSDSEGNSK) show a composition bias toward basic and acidic residues. A phosphotyrosine; by FYN mark is found at Tyr-959 and Tyr-972. The tract at residues 975–977 (TRL) is PDZ-binding domain.

The protein belongs to the transient receptor (TC 1.A.4) family. STrpC subfamily. TRPC4 sub-subfamily. In terms of assembly, homotetramer. Heterotetramer with TRPC1 and/or TRPC5. Forms a heteromeric ion channel with TRPC1, with a 1:3 TRPC1:TRPC4 stoichiometry. Interacts with TRPC4AP. Isoform alpha but not isoform beta interacts with ITPR1, ITPR2 and ITPR3. Interacts with (via PDZ-binding domain) with NHERF1. Interacts with MX1 and RNF24. Interacts (via CIRB domain) with SESTD1 (via spectrin 1 repeat). Interacts with CDH5 and CTNNB1. Interacts with SPTAN1 (via C-terminal spectrin repeats) and SPTBN5 (via C-terminus). Interacts (via protein 4.1-binding domain) with EPB41L2. Interacts with PLSCR1. In terms of processing, phosphorylation modulates TRPC channel function by regulating the level of TRPC4 at the cell surface and by increasing the association with NHERF1. In terms of tissue distribution, strongly expressed in placenta. Expressed at lower levels in heart, pancreas, kidney and brain. Expressed in endothelial cells. Isoform alpha was found to be the predominant isoform. Isoform beta was not found in pancreas and brain.

The protein resides in the cell membrane. The enzyme catalyses Ca(2+)(in) = Ca(2+)(out). It carries out the reaction Na(+)(in) = Na(+)(out). It catalyses the reaction Li(+)(in) = Li(+)(out). The catalysed reaction is Cs(+)(in) = Cs(+)(out). With respect to regulation, may be operated by a phosphatidylinositol second messenger system activated by receptor tyrosine kinases or G-protein coupled receptors. May be activated by intracellular calcium store depletion. Inhibited by xanthine-based inhibitor Pico145. In terms of biological role, forms a receptor-activated non-selective calcium permeant cation channel. Acts as a cell-cell contact-dependent endothelial calcium entry channel. Forms a homomeric ion channel or a heteromeric ion channel with TRPC1; the heteromeric ion channel has reduced calcium permeability compared to the homomeric channel. Also permeable to monovalent ions including sodium, lithium and cesium ions. Functionally, forms a receptor-activated non-selective calcium permeant cation channel. The sequence is that of Short transient receptor potential channel 4 (TRPC4) from Homo sapiens (Human).